We begin with the raw amino-acid sequence, 330 residues long: DNA-directed RNA polymerase I subunit RPA43 (330 aa).

The segment at Ala-251 to Gln-330 is disordered. A phosphoserine mark is found at Ser-306, Ser-318, and Ser-325. Residues His-317–Gln-330 show a composition bias toward basic and acidic residues.

Belongs to the eukaryotic RPA43 RNA polymerase subunit family. In terms of assembly, component of the RNA polymerase I (Pol I) complex consisting of 13 subunits: a ten-subunit catalytic core composed of POLR1A/RPA1, POLR1B/RPA2, POLR1C/RPAC1, POLR1D/RPAC2, POLR1H/RPA12, POLR2E/RPABC1, POLR2F/RPABC2, POLR2H/RPABC3, POLR2K/RPABC4 and POLR2L/RPABC5; a mobile stalk subunit POLR1F/RPA43 protruding from the core and additional subunits homologous to general transcription factors POLR1E/RPA49 and POLR1G/RPA34. Interacts with RRN3/TIF-IA. Interacts with RRN3/TIF-IA. In terms of tissue distribution, widely expressed.

The protein localises to the nucleus. It is found in the nucleolus. Functionally, component of RNA polymerase I (Pol I), a DNA-dependent RNA polymerase which synthesizes ribosomal RNA precursors using the four ribonucleoside triphosphates as substrates. Through its association with RRN3/TIF-IA may be involved in recruitment of Pol I to rDNA promoters. The chain is DNA-directed RNA polymerase I subunit RPA43 from Mus musculus (Mouse).